We begin with the raw amino-acid sequence, 349 residues long: MALPDFSMRQLLEAGAHFGHQSHRWNPKMQPFIFGTRNNIHIIDLAQTVPALYQALQAVSDTVAKGGRVLFVGTKRQAADVVADSARRSAQYFVNSRWLGGTLTNWKTISGSIQRLRKVDEVLAGGGQGLTKKERLMLSREKDKLEKALGGIKDMGGVPDLLFVIDTNKEQLAIKEAKRLGIPVAAIVDTNCDPDGITYVVPANDDAGRAIALYCDLIARAAIDGISRGQGALGLDIGASEEPVAEELPANLNEPEVAQVDISEPYVGEPFELLAAPRGAPDDLTKLTGVGPQLVQKLNDAGIYHYWQIAAMAPEDVAKVDAELKLNGRIARDGWINQARAFVEAAAAA.

The protein belongs to the universal ribosomal protein uS2 family.

This Methylobacterium sp. (strain 4-46) protein is Small ribosomal subunit protein uS2.